A 132-amino-acid chain; its full sequence is D-ribose pyranase (132 aa).

Histidine 20 serves as the catalytic Proton donor. Substrate-binding positions include aspartate 28, histidine 99, and 121–123; that span reads YSN.

This sequence belongs to the RbsD / FucU family. RbsD subfamily. Homodecamer.

It is found in the cytoplasm. It catalyses the reaction beta-D-ribopyranose = beta-D-ribofuranose. The protein operates within carbohydrate metabolism; D-ribose degradation; D-ribose 5-phosphate from beta-D-ribopyranose: step 1/2. Catalyzes the interconversion of beta-pyran and beta-furan forms of D-ribose. The polypeptide is D-ribose pyranase (Streptococcus agalactiae serotype III (strain NEM316)).